The chain runs to 376 residues: Queuine tRNA-ribosyltransferase (376 aa).

Residue aspartate 93 is the Proton acceptor of the active site. Residues 93–97 (DSGGF), aspartate 147, glutamine 190, and glycine 217 each bind substrate. The segment at 248–254 (GVGKPDD) is RNA binding. Aspartate 267 (nucleophile) is an active-site residue. Zn(2+)-binding residues include cysteine 305, cysteine 307, cysteine 310, and histidine 336.

It belongs to the queuine tRNA-ribosyltransferase family. Homodimer. Within each dimer, one monomer is responsible for RNA recognition and catalysis, while the other monomer binds to the replacement base PreQ1. The cofactor is Zn(2+).

It carries out the reaction 7-aminomethyl-7-carbaguanine + guanosine(34) in tRNA = 7-aminomethyl-7-carbaguanosine(34) in tRNA + guanine. The protein operates within tRNA modification; tRNA-queuosine biosynthesis. Catalyzes the base-exchange of a guanine (G) residue with the queuine precursor 7-aminomethyl-7-deazaguanine (PreQ1) at position 34 (anticodon wobble position) in tRNAs with GU(N) anticodons (tRNA-Asp, -Asn, -His and -Tyr). Catalysis occurs through a double-displacement mechanism. The nucleophile active site attacks the C1' of nucleotide 34 to detach the guanine base from the RNA, forming a covalent enzyme-RNA intermediate. The proton acceptor active site deprotonates the incoming PreQ1, allowing a nucleophilic attack on the C1' of the ribose to form the product. After dissociation, two additional enzymatic reactions on the tRNA convert PreQ1 to queuine (Q), resulting in the hypermodified nucleoside queuosine (7-(((4,5-cis-dihydroxy-2-cyclopenten-1-yl)amino)methyl)-7-deazaguanosine). The chain is Queuine tRNA-ribosyltransferase from Ruegeria sp. (strain TM1040) (Silicibacter sp.).